Here is a 189-residue protein sequence, read N- to C-terminus: Crossover junction endodeoxyribonuclease RuvC (189 aa).

Catalysis depends on residues D11, E71, and D143. 3 residues coordinate Mg(2+): D11, E71, and D143.

This sequence belongs to the RuvC family. As to quaternary structure, homodimer which binds Holliday junction (HJ) DNA. The HJ becomes 2-fold symmetrical on binding to RuvC with unstacked arms; it has a different conformation from HJ DNA in complex with RuvA. In the full resolvosome a probable DNA-RuvA(4)-RuvB(12)-RuvC(2) complex forms which resolves the HJ. Mg(2+) is required as a cofactor.

The protein localises to the cytoplasm. The enzyme catalyses Endonucleolytic cleavage at a junction such as a reciprocal single-stranded crossover between two homologous DNA duplexes (Holliday junction).. In terms of biological role, the RuvA-RuvB-RuvC complex processes Holliday junction (HJ) DNA during genetic recombination and DNA repair. Endonuclease that resolves HJ intermediates. Cleaves cruciform DNA by making single-stranded nicks across the HJ at symmetrical positions within the homologous arms, yielding a 5'-phosphate and a 3'-hydroxyl group; requires a central core of homology in the junction. The consensus cleavage sequence is 5'-(A/T)TT(C/G)-3'. Cleavage occurs on the 3'-side of the TT dinucleotide at the point of strand exchange. HJ branch migration catalyzed by RuvA-RuvB allows RuvC to scan DNA until it finds its consensus sequence, where it cleaves and resolves the cruciform DNA. The protein is Crossover junction endodeoxyribonuclease RuvC of Methylorubrum populi (strain ATCC BAA-705 / NCIMB 13946 / BJ001) (Methylobacterium populi).